The primary structure comprises 176 residues: Inner membrane-spanning protein YciB (176 aa).

A run of 6 helical transmembrane segments spans residues 3-23 (FLFDLFPIILFFVAFKVWGIF), 24-44 (TATAVAIVATLAQVAWVAFRH), 49-69 (TMLWVSLGVIVVFGGATLVLH), 72-92 (KFIQWKPTVLYWLFAIGLLAA), 121-141 (LAWALFFAVLGVANLYVVHNF), and 149-169 (FKLFGTTGAMVVFIILQSLWL).

This sequence belongs to the YciB family.

It is found in the cell inner membrane. In terms of biological role, plays a role in cell envelope biogenesis, maintenance of cell envelope integrity and membrane homeostasis. The sequence is that of Inner membrane-spanning protein YciB from Burkholderia cenocepacia (strain ATCC BAA-245 / DSM 16553 / LMG 16656 / NCTC 13227 / J2315 / CF5610) (Burkholderia cepacia (strain J2315)).